The primary structure comprises 394 residues: GPI transamidase component GAB1 (394 aa).

Over 1 to 135 the chain is Cytoplasmic; the sequence is MDSTALKVAL…TLLSCISRSS (135 aa). A helical membrane pass occupies residues 136-156; the sequence is IIFTNFAISSSLYCILAEGNV. The Lumenal segment spans residues 157-160; the sequence is LLSS. Residues 161–181 traverse the membrane as a helical segment; it reads VMISISGYLSVYPILLLIPLL. Over 182–190 the chain is Cytoplasmic; that stretch reads GMLKSWRQR. Residues 191–211 form a helical membrane-spanning segment; sequence ILSAIVSILSLLILLLFSYSI. Residues 212–224 lie on the Lumenal side of the membrane; that stretch reads LGSQSWSFLTQVY. A helical transmembrane segment spans residues 225–245; that stretch reads GSIITFEKVFPNLGLWWYFFI. Positions 235–255 are may be involved in recognition of long-chain fatty acids in GPI; it reads PNLGLWWYFFIEMFDTFIPFF. The Cytoplasmic portion of the chain corresponds to 246-250; sequence EMFDT. A helical transmembrane segment spans residues 251-271; it reads FIPFFKAVFNIFIAVFITPFT. Residues 272-297 lie on the Lumenal side of the membrane; that stretch reads LRYHKQPFYAFILCIGWIVLTKPYPS. Residues 298–318 form a helical membrane-spanning segment; sequence LGDAGFFFSFLPFFTPLFGYL. At 319 to 324 the chain is on the cytoplasmic side; that stretch reads RYPIIS. A helical transmembrane segment spans residues 325–345; the sequence is ALLFLHAIVLAPIFYHLWVVL. At 346-351 the chain is on the lumenal side; it reads GSGNSN. Residues 352–372 traverse the membrane as a helical segment; it reads FFYAISLVYALAIASILVDLN. Topologically, residues 373-394 are cytoplasmic; the sequence is WAMLRIEYDNGIPNFKLKVTQI.

This sequence belongs to the PIGU family. As to quaternary structure, forms a complex with GPI16, GPI17, GPI8 and GAA1.

It is found in the endoplasmic reticulum membrane. Its pathway is glycolipid biosynthesis; glycosylphosphatidylinositol-anchor biosynthesis. Component of the GPI transamidase complex. May be involved in the recognition of either the GPI attachment signal or the lipid portion of GPI. In Saccharomyces cerevisiae (strain ATCC 204508 / S288c) (Baker's yeast), this protein is GPI transamidase component GAB1 (GAB1).